A 284-amino-acid polypeptide reads, in one-letter code: Bifunctional protein FolD (284 aa).

Residues 164–166 (GRS) and S189 each bind NADP(+).

Belongs to the tetrahydrofolate dehydrogenase/cyclohydrolase family. As to quaternary structure, homodimer.

The enzyme catalyses (6R)-5,10-methylene-5,6,7,8-tetrahydrofolate + NADP(+) = (6R)-5,10-methenyltetrahydrofolate + NADPH. The catalysed reaction is (6R)-5,10-methenyltetrahydrofolate + H2O = (6R)-10-formyltetrahydrofolate + H(+). It participates in one-carbon metabolism; tetrahydrofolate interconversion. In terms of biological role, catalyzes the oxidation of 5,10-methylenetetrahydrofolate to 5,10-methenyltetrahydrofolate and then the hydrolysis of 5,10-methenyltetrahydrofolate to 10-formyltetrahydrofolate. This is Bifunctional protein FolD from Listeria monocytogenes serovar 1/2a (strain ATCC BAA-679 / EGD-e).